Consider the following 149-residue polypeptide: Transcriptional repressor NrdR (149 aa).

A zinc finger spans residues 3-34 (CPFCFAVDTKVIDSRLVGEGSSVRRRRQCLVC). The region spanning 49–139 (PRVVKSNDVR…VYRSFEDIKE (91 aa)) is the ATP-cone domain.

It belongs to the NrdR family. Zn(2+) serves as cofactor.

Functionally, negatively regulates transcription of bacterial ribonucleotide reductase nrd genes and operons by binding to NrdR-boxes. In Escherichia fergusonii (strain ATCC 35469 / DSM 13698 / CCUG 18766 / IAM 14443 / JCM 21226 / LMG 7866 / NBRC 102419 / NCTC 12128 / CDC 0568-73), this protein is Transcriptional repressor NrdR.